We begin with the raw amino-acid sequence, 257 residues long: General L-amino acid transport ATP-binding protein AapP (257 aa).

An ABC transporter domain is found at 18 to 252 (VEIVNMNKWY…PQHERTKLFL (235 aa)). 50 to 57 (GPSGSGKS) provides a ligand contact to ATP.

It belongs to the ABC transporter superfamily.

In terms of biological role, part of a binding-protein-dependent transport system for L-amino acids, affects the uptake as well as the efflux of these amino acids. Probably responsible for energy coupling to the transport system. This is General L-amino acid transport ATP-binding protein AapP (aapP) from Rhizobium johnstonii (strain DSM 114642 / LMG 32736 / 3841) (Rhizobium leguminosarum bv. viciae).